Reading from the N-terminus, the 125-residue chain is MFPGGKMNPRMMKQMQKMMKDFGMDSEDLKAVKVTIELEDKIMVFDKPKVQVMDMMGTKTYTISGRSKNTSKTAEKIEDTEVKVEVTEEDIEMVATQCNVSKEEAKTALEDVNGDLAEAILKLGN.

Positions 9–76 (PRMMKQMQKM…SKNTSKTAEK (68 aa)) constitute an NAC-A/B domain.

The protein belongs to the NAC-alpha family. In terms of assembly, homodimer. Interacts with the ribosome. Binds ribosomal RNA.

In terms of biological role, contacts the emerging nascent chain on the ribosome. The polypeptide is Nascent polypeptide-associated complex protein (Methanococcus vannielii (strain ATCC 35089 / DSM 1224 / JCM 13029 / OCM 148 / SB)).